A 708-amino-acid chain; its full sequence is MSITKLAPAAFDLHQPFPPSGDQPAAIAKLIEGIQSGKTAQTLLGATGTGKTYTMANVIASVQRPALILSHNKTLAAQLYGEFKEFFPNNAVHYFVSYYDYYQPEAYIPQRDVYIEKDSSINEEIDRLRLATTSSLVSRRDVVIVASVSSIYGLGSPDDYRQLVVDLHQGEQTRRDHLLLKFVDLQYQRNDIQFERGKFRVRGDSIELWPSYEEFAYRIEMWGDEIEKISLIKPTSGETIKTVEHLYIYPCKHFVMPEDRIQRAIRLLREELTQQLEIFQSQGKLLEAQRLSARTKFDLEMLAEVGHCPGIENYSRPLSGKEPGATPDTLYDFFPKDFITFVDESHVTVPQVRAMYAGDRSRKITLVEHGFRLPCALDNRPLKFDEWEERTGQICFVSATPSDYELERTGGEVVEQIIRPTGLLDPEVEIVSARGQVTHLLEQVRIRAERDERVLVTALTKRLAEDLATYFQEQGVKCRWLHSELNAFERVDLLQELRAGQFDCLVGVNLLREGLDLPEVSLVAILDADKEGFLRSETSLIQTIGRAARNANSRVILYADKVTDSMQMAIDETERRRVIQMEYNAKHGIVPKTVRKSIRKGIDTEAANHKESTRKAQDSGEAIYITIEYVDKLEQEMLAAAEDLEFERAARLRDRVLQLKEHIGKPLSEVEIVDEKSAGKSGGRGRGRRGAKKKGASKGTKIPRPKRG.

The Helicase ATP-binding domain occupies 32-419 (EGIQSGKTAQ…GGEVVEQIIR (388 aa)). 45–52 (GATGTGKT) contacts ATP. Residues 98–121 (YYDYYQPEAYIPQRDVYIEKDSSI) carry the Beta-hairpin motif. The Helicase C-terminal domain occupies 436 to 598 (QVTHLLEQVR…IVPKTVRKSI (163 aa)). Residues 627–662 (IEYVDKLEQEMLAAAEDLEFERAARLRDRVLQLKEH) enclose the UVR domain. The disordered stretch occupies residues 668–708 (SEVEIVDEKSAGKSGGRGRGRRGAKKKGASKGTKIPRPKRG). Positions 683-708 (GRGRGRRGAKKKGASKGTKIPRPKRG) are enriched in basic residues.

The protein belongs to the UvrB family. Forms a heterotetramer with UvrA during the search for lesions. Interacts with UvrC in an incision complex.

Its subcellular location is the cytoplasm. The UvrABC repair system catalyzes the recognition and processing of DNA lesions. A damage recognition complex composed of 2 UvrA and 2 UvrB subunits scans DNA for abnormalities. Upon binding of the UvrA(2)B(2) complex to a putative damaged site, the DNA wraps around one UvrB monomer. DNA wrap is dependent on ATP binding by UvrB and probably causes local melting of the DNA helix, facilitating insertion of UvrB beta-hairpin between the DNA strands. Then UvrB probes one DNA strand for the presence of a lesion. If a lesion is found the UvrA subunits dissociate and the UvrB-DNA preincision complex is formed. This complex is subsequently bound by UvrC and the second UvrB is released. If no lesion is found, the DNA wraps around the other UvrB subunit that will check the other stand for damage. In Rhodopirellula baltica (strain DSM 10527 / NCIMB 13988 / SH1), this protein is UvrABC system protein B.